The sequence spans 312 residues: Protease HtpX homolog (312 aa).

A run of 2 helical transmembrane segments spans residues 6-26 and 28-48; these read TAVL…AIGG and GGMM…YWYA. Zn(2+) is bound at residue His130. Residue Glu131 is part of the active site. Zn(2+) is bound at residue His134. Transmembrane regions (helical) follow at residues 145–165 and 173–193; these read ITAS…FFGG and PFGG…AMVV. Zn(2+) is bound at residue Glu202. A compositionally biased stretch (low complexity) spans 287–297; the sequence is PAPARAAPARG. The disordered stretch occupies residues 287-312; that stretch reads PAPARAAPARGPWGGNTGGTRRGPWG. The segment covering 298 to 312 has biased composition (gly residues); the sequence is PWGGNTGGTRRGPWG.

Belongs to the peptidase M48B family. It depends on Zn(2+) as a cofactor.

Its subcellular location is the cell inner membrane. In Azorhizobium caulinodans (strain ATCC 43989 / DSM 5975 / JCM 20966 / LMG 6465 / NBRC 14845 / NCIMB 13405 / ORS 571), this protein is Protease HtpX homolog.